Here is a 347-residue protein sequence, read N- to C-terminus: 3-isopropylmalate dehydrogenase (347 aa).

The substrate site is built by R94, R104, R128, and D219. 3 residues coordinate Mg(2+): D219, D243, and D247. 279-291 (GSAPDIAGQGKAD) serves as a coordination point for NAD(+).

This sequence belongs to the isocitrate and isopropylmalate dehydrogenases family. LeuB type 2 subfamily. As to quaternary structure, homodimer. It depends on Mg(2+) as a cofactor. Requires Mn(2+) as cofactor.

It is found in the cytoplasm. The enzyme catalyses (2R,3S)-3-isopropylmalate + NAD(+) = 4-methyl-2-oxopentanoate + CO2 + NADH. It functions in the pathway amino-acid biosynthesis; L-leucine biosynthesis; L-leucine from 3-methyl-2-oxobutanoate: step 3/4. Functionally, catalyzes the oxidation of 3-carboxy-2-hydroxy-4-methylpentanoate (3-isopropylmalate) to 3-carboxy-4-methyl-2-oxopentanoate. The product decarboxylates to 4-methyl-2 oxopentanoate. The chain is 3-isopropylmalate dehydrogenase from Streptomyces coelicolor (strain ATCC BAA-471 / A3(2) / M145).